The primary structure comprises 467 residues: Argininosuccinate lyase (467 aa).

This sequence belongs to the lyase 1 family. Argininosuccinate lyase subfamily.

It is found in the cytoplasm. It carries out the reaction 2-(N(omega)-L-arginino)succinate = fumarate + L-arginine. The protein operates within amino-acid biosynthesis; L-arginine biosynthesis; L-arginine from L-ornithine and carbamoyl phosphate: step 3/3. The protein is Argininosuccinate lyase of Chromohalobacter salexigens (strain ATCC BAA-138 / DSM 3043 / CIP 106854 / NCIMB 13768 / 1H11).